The primary structure comprises 373 residues: Probable G-protein coupled receptor 173 (373 aa).

Residues 1-26 (MANTTGEPEEVSGALSPPSAVAYVKL) are Extracellular-facing. Asn-3 carries N-linked (GlcNAc...) asparagine glycosylation. A helical membrane pass occupies residues 27 to 47 (VLLGLIMCVSLAGNAILSLLV). The Cytoplasmic portion of the chain corresponds to 48 to 59 (LKDRALHKAPYY). Residues 60-80 (FLLDLCLADGIRSAVCFPFVL) traverse the membrane as a helical segment. Residues 81–97 (ASVRHGSSWTFSALSCK) lie on the Extracellular side of the membrane. A disulfide bridge connects residues Cys-96 and Cys-174. The chain crosses the membrane as a helical span at residues 98 to 118 (IVAFMAVLFCFHAAFMLFCIS). The Cytoplasmic portion of the chain corresponds to 119-139 (VTRYMAIAHHRFYAKRMTLWT). The helical transmembrane segment at 140–160 (CAAVICMAWTLSVAMAFPPVF) threads the bilayer. Topologically, residues 161-188 (DVGTYKFIREEDQCIFEHRYFKANDTLG) are extracellular. N-linked (GlcNAc...) asparagine glycosylation occurs at Asn-184. Residues 189-209 (FMLMLAVLMAATHAVYGKLLL) form a helical membrane-spanning segment. Residues 210 to 287 (FEYRHRKMKP…VKGEKQLGRM (78 aa)) are Cytoplasmic-facing. The helical transmembrane segment at 288–308 (FYAITLLFLLLWSPYIVACYW) threads the bilayer. Residues 309 to 322 (RVFVKACAVPHRYL) lie on the Extracellular side of the membrane. Residues 323 to 343 (ATAVWMSFAQAAVNPIVCFLL) form a helical membrane-spanning segment. The Cytoplasmic segment spans residues 344–373 (NKDLKKCLRTHAPCWGTGGAPAPREPYCVM).

It belongs to the G-protein coupled receptor 1 family.

It is found in the cell membrane. Functionally, is a receptor for the SMIM20 derived peptides Phoenixin-14 and Phoenixin-20. It mediates the Phoenixin-14 and Phoenixin-20 augmentation of gonadotropin-releasing hormone (GNRH) signaling in the hypothalamus and pituitary gland. In the ovary, it mediates the effects of Phoenixin-14 and Phoenixin-20 induced granulosa cell proliferation during follicular growth. The chain is Probable G-protein coupled receptor 173 (GPR173) from Bos taurus (Bovine).